Here is an 89-residue protein sequence, read N- to C-terminus: Small ribosomal subunit protein uS15 (89 aa).

It belongs to the universal ribosomal protein uS15 family. Part of the 30S ribosomal subunit. Forms a bridge to the 50S subunit in the 70S ribosome, contacting the 23S rRNA.

Its function is as follows. One of the primary rRNA binding proteins, it binds directly to 16S rRNA where it helps nucleate assembly of the platform of the 30S subunit by binding and bridging several RNA helices of the 16S rRNA. In terms of biological role, forms an intersubunit bridge (bridge B4) with the 23S rRNA of the 50S subunit in the ribosome. The protein is Small ribosomal subunit protein uS15 of Limosilactobacillus reuteri (strain DSM 20016) (Lactobacillus reuteri).